We begin with the raw amino-acid sequence, 381 residues long: Opsin-1 (381 aa).

Over 1 to 53 (MASASLISEPSFSAYWGGSGGFANQTVVDKVPPEMLYLVDPHWYQFPPMNPLW) the chain is Extracellular. Asn24 is a glycosylation site (N-linked (GlcNAc...) asparagine). A helical transmembrane segment spans residues 54-78 (HGLLGFVIGVLGVISVIGNGMVIYI). Topologically, residues 79-90 (FSTTKSLRTPSN) are cytoplasmic. The chain crosses the membrane as a helical span at residues 91 to 115 (LLVVNLAFSDFLMMFTMSAPMGINC). Topologically, residues 116–130 (YYETWVLGPFMCELY) are extracellular. The cysteines at positions 127 and 204 are disulfide-linked. The helical transmembrane segment at 131 to 150 (ALFGSLFGCGSIWTMTMIAL) threads the bilayer. The Cytoplasmic portion of the chain corresponds to 151 to 169 (DRYNVIVKGLSAKPMTNKT). Residues 170 to 193 (AMLRILFIWAFSVAWTIMPLFGWN) traverse the membrane as a helical segment. Over 194-217 (RYVPEGNMTACGTDYLTKDWVSRS) the chain is Extracellular. Residue Asn200 is glycosylated (N-linked (GlcNAc...) asparagine). A helical transmembrane segment spans residues 218–245 (YILVYSFFVYLLPLGTIIYSYFFILQAV). Residues 246-280 (SAHEKQMREQRKKMNVASLRSAEASQTSAECKLAK) are Cytoplasmic-facing. Residues 281-304 (VALMTISLWFFGWTPYLIINFTGI) traverse the membrane as a helical segment. At 305–311 (FETMKIS) the chain is on the extracellular side. Residues 312 to 336 (PLLTIWGSLFAKANAVFNPIVYGIS) form a helical membrane-spanning segment. Lys323 carries the post-translational modification N6-(retinylidene)lysine. Topologically, residues 337-381 (HPKYRAALEKKFPSLACASSSDDNTSVASGATTVSDEKSEKSASA) are cytoplasmic. Residues 354–370 (ASSSDDNTSVASGATTV) are compositionally biased toward polar residues. A disordered region spans residues 354–381 (ASSSDDNTSVASGATTVSDEKSEKSASA). Residues 371-381 (SDEKSEKSASA) are compositionally biased toward basic and acidic residues.

Belongs to the G-protein coupled receptor 1 family. Opsin subfamily. In terms of processing, phosphorylated on some or all of the serine and threonine residues present in the C-terminal region.

It is found in the cell projection. The protein resides in the rhabdomere membrane. Its function is as follows. Visual pigments are the light-absorbing molecules that mediate vision. They consist of an apoprotein, opsin, covalently linked to cis-retinal. In Schistocerca gregaria (Desert locust), this protein is Opsin-1 (Lo1).